The primary structure comprises 371 residues: Glutamate 5-kinase (371 aa).

Lys-12 is an ATP binding site. Residues Ser-52, Asp-136, and Asn-148 each contribute to the substrate site. ATP-binding positions include 168 to 169 and 210 to 216; these read SD and TGGMRTK. Positions 275–354 constitute a PUA domain; that stretch reads QGEILVDEGA…EDIAEKFGYS (80 aa).

Belongs to the glutamate 5-kinase family.

It is found in the cytoplasm. It carries out the reaction L-glutamate + ATP = L-glutamyl 5-phosphate + ADP. Its pathway is amino-acid biosynthesis; L-proline biosynthesis; L-glutamate 5-semialdehyde from L-glutamate: step 1/2. Functionally, catalyzes the transfer of a phosphate group to glutamate to form L-glutamate 5-phosphate. In Idiomarina loihiensis (strain ATCC BAA-735 / DSM 15497 / L2-TR), this protein is Glutamate 5-kinase.